Reading from the N-terminus, the 111-residue chain is Large ribosomal subunit protein uL22 (111 aa).

It belongs to the universal ribosomal protein uL22 family. In terms of assembly, part of the 50S ribosomal subunit.

Its function is as follows. This protein binds specifically to 23S rRNA; its binding is stimulated by other ribosomal proteins, e.g. L4, L17, and L20. It is important during the early stages of 50S assembly. It makes multiple contacts with different domains of the 23S rRNA in the assembled 50S subunit and ribosome. The globular domain of the protein is located near the polypeptide exit tunnel on the outside of the subunit, while an extended beta-hairpin is found that lines the wall of the exit tunnel in the center of the 70S ribosome. This Clostridium perfringens (strain ATCC 13124 / DSM 756 / JCM 1290 / NCIMB 6125 / NCTC 8237 / Type A) protein is Large ribosomal subunit protein uL22.